A 382-amino-acid chain; its full sequence is Lipid-A-disaccharide synthase (382 aa).

It belongs to the LpxB family.

The catalysed reaction is 2-N,3-O-bis[(3R)-3-hydroxytetradecanoyl]-alpha-D-glucosaminyl 1-phosphate + UDP-2-N,3-O-bis[(3R)-3-hydroxytetradecanoyl]-alpha-D-glucosamine = lipid A disaccharide (E. coli) + UDP + H(+). The enzyme catalyses a lipid X + a UDP-2-N,3-O-bis[(3R)-3-hydroxyacyl]-alpha-D-glucosamine = a lipid A disaccharide + UDP + H(+). The protein operates within glycolipid biosynthesis; lipid IV(A) biosynthesis; lipid IV(A) from (3R)-3-hydroxytetradecanoyl-[acyl-carrier-protein] and UDP-N-acetyl-alpha-D-glucosamine: step 5/6. Condensation of UDP-2,3-diacylglucosamine and 2,3-diacylglucosamine-1-phosphate to form lipid A disaccharide, a precursor of lipid A, a phosphorylated glycolipid that anchors the lipopolysaccharide to the outer membrane of the cell. The polypeptide is Lipid-A-disaccharide synthase (Shigella flexneri).